The sequence spans 397 residues: Elongation factor Tu (397 aa).

One can recognise a tr-type G domain in the interval 10–207; sequence LPHVNVGTIG…TLDAYIPEPV (198 aa). Residues 19 to 26 are G1; it reads GHVDHGKT. 19–26 serves as a coordination point for GTP; the sequence is GHVDHGKT. Thr26 contacts Mg(2+). Residues 60–64 are G2; the sequence is GITIN. Positions 81-84 are G3; the sequence is DCPG. GTP contacts are provided by residues 81-85 and 136-139; these read DCPGH and NKAD. Positions 136 to 139 are G4; that stretch reads NKAD. Residues 174–176 form a G5 region; sequence SAR.

Belongs to the TRAFAC class translation factor GTPase superfamily. Classic translation factor GTPase family. EF-Tu/EF-1A subfamily. As to quaternary structure, monomer.

Its subcellular location is the cytoplasm. The enzyme catalyses GTP + H2O = GDP + phosphate + H(+). Functionally, GTP hydrolase that promotes the GTP-dependent binding of aminoacyl-tRNA to the A-site of ribosomes during protein biosynthesis. The chain is Elongation factor Tu from Pseudomonas entomophila (strain L48).